The primary structure comprises 118 residues: Large ribosomal subunit protein bL20 (118 aa).

This sequence belongs to the bacterial ribosomal protein bL20 family.

Its function is as follows. Binds directly to 23S ribosomal RNA and is necessary for the in vitro assembly process of the 50S ribosomal subunit. It is not involved in the protein synthesizing functions of that subunit. The protein is Large ribosomal subunit protein bL20 of Campylobacter curvus (strain 525.92).